The primary structure comprises 512 residues: Probable capsid protein 4 (512 aa).

This sequence belongs to the NCLDV major capsid protein family.

The protein localises to the virion. The protein is Probable capsid protein 4 of Acanthamoeba polyphaga mimivirus (APMV).